A 235-amino-acid chain; its full sequence is NAD(P)H-quinone oxidoreductase subunit K (235 aa).

Residues cysteine 52, cysteine 53, cysteine 117, and cysteine 148 each coordinate [4Fe-4S] cluster. Residues 216 to 226 (AGAAVAPQLPV) are compositionally biased toward low complexity. Positions 216–235 (AGAAVAPQLPVTEKEGRDRA) are disordered.

This sequence belongs to the complex I 20 kDa subunit family. As to quaternary structure, NDH-1 can be composed of about 15 different subunits; different subcomplexes with different compositions have been identified which probably have different functions. It depends on [4Fe-4S] cluster as a cofactor.

The protein localises to the cellular thylakoid membrane. It carries out the reaction a plastoquinone + NADH + (n+1) H(+)(in) = a plastoquinol + NAD(+) + n H(+)(out). The enzyme catalyses a plastoquinone + NADPH + (n+1) H(+)(in) = a plastoquinol + NADP(+) + n H(+)(out). NDH-1 shuttles electrons from an unknown electron donor, via FMN and iron-sulfur (Fe-S) centers, to quinones in the respiratory and/or the photosynthetic chain. The immediate electron acceptor for the enzyme in this species is believed to be plastoquinone. Couples the redox reaction to proton translocation, and thus conserves the redox energy in a proton gradient. Cyanobacterial NDH-1 also plays a role in inorganic carbon-concentration. The protein is NAD(P)H-quinone oxidoreductase subunit K of Synechococcus elongatus (strain ATCC 33912 / PCC 7942 / FACHB-805) (Anacystis nidulans R2).